The sequence spans 622 residues: Threonine--tRNA ligase (622 aa).

Residues 1–134 (MKTLLIHSDY…GHPLSELSRK (134 aa)) form an editing domain region. Positions 199–498 (PHVKYIKEKE…TLEDKPPALP (300 aa)) are catalytic. Residues Cys-291, His-343, and His-467 each contribute to the Zn(2+) site.

It belongs to the class-II aminoacyl-tRNA synthetase family. As to quaternary structure, homodimer. Zn(2+) is required as a cofactor.

It is found in the cytoplasm. The enzyme catalyses tRNA(Thr) + L-threonine + ATP = L-threonyl-tRNA(Thr) + AMP + diphosphate + H(+). Its function is as follows. Catalyzes the attachment of threonine to tRNA(Thr) in a two-step reaction: L-threonine is first activated by ATP to form Thr-AMP and then transferred to the acceptor end of tRNA(Thr). Also edits incorrectly charged L-seryl-tRNA(Thr). This chain is Threonine--tRNA ligase, found in Methanococcus vannielii (strain ATCC 35089 / DSM 1224 / JCM 13029 / OCM 148 / SB).